We begin with the raw amino-acid sequence, 243 residues long: Tyrosine recombinase XerD-like (243 aa).

Positions 1–72 (MKEYIRPFLN…AVNQFLYFLY (72 aa)) constitute a Core-binding (CB) domain. A Tyr recombinase domain is found at 85–243 (LPKVSVSKEQ…KTMITLEKYR (159 aa)). Active-site residues include Lys-149 and Arg-210. Tyr-242 (O-(3'-phospho-DNA)-tyrosine intermediate) is an active-site residue.

This sequence belongs to the 'phage' integrase family. XerD-like subfamily.

The protein resides in the cytoplasm. In terms of biological role, putative tyrosine recombinase. Not involved in the cutting and rejoining of the recombining DNA molecules on dif(SL) site. The protein is Tyrosine recombinase XerD-like of Streptococcus sanguinis (strain SK36).